The chain runs to 216 residues: Adenylate kinase (216 aa).

ATP is bound at residue 11–16 (GSGKGT). The tract at residues 31 to 60 (ATGDLFRKAIECGDELGDTVKSYMERGELV) is NMP. Residues Thr32, Arg37, 58–60 (ELV), 86–89 (GFPR), and Gln93 each bind AMP. Positions 127 to 163 (GRWVCRSCQSPYQSGCAEVTKGKCSRCQGELYQRPDD) are LID. Residue Arg128 coordinates ATP. Residues Cys131, Cys134, Cys150, and Cys153 each coordinate Zn(2+). Residues Arg160 and Arg171 each coordinate AMP. Ala199 is a binding site for ATP.

This sequence belongs to the adenylate kinase family. As to quaternary structure, monomer.

It localises to the cytoplasm. The enzyme catalyses AMP + ATP = 2 ADP. It functions in the pathway purine metabolism; AMP biosynthesis via salvage pathway; AMP from ADP: step 1/1. Its function is as follows. Catalyzes the reversible transfer of the terminal phosphate group between ATP and AMP. Plays an important role in cellular energy homeostasis and in adenine nucleotide metabolism. This is Adenylate kinase from Dehalococcoides mccartyi (strain ATCC BAA-2100 / JCM 16839 / KCTC 5957 / BAV1).